The following is a 466-amino-acid chain: Probable agmatine/putrescine antiporter AguD (466 aa).

12 consecutive transmembrane segments (helical) span residues 8 to 28, 30 to 50, 85 to 105, 120 to 140, 144 to 164, 192 to 212, 226 to 246, 273 to 293, 325 to 345, 350 to 370, 398 to 418, and 426 to 446; these read FSLFSAILSVICVVFVAEAAA, VAAIGNSQFFWWIVLIVAFLL, ASWFYWVNFPLWMASLAVLCP, ISLLIELIFIWVIVLISLYPV, VWILNGGAVIKVFLALALGGL, LSFISVIIFNLLGFEVICTFA, IIIGGIVIAAIYMFSAFGIGV, WFISLIAFLFMLTLVGNMVSW, WGAALMNGIVATFIVVIAPLL, LFWSFFSLNLVLFLLSYIPVF, VYMALPMIIIIISLIFTAIPL, and TEQLPITIGAIIFIVIGELII.

It belongs to the amino acid-polyamine-organocation (APC) superfamily. Glutamate:GABA antiporter (GGA) (TC 2.A.3.7) family.

The protein localises to the cell membrane. Its function is as follows. Probably catalyzes agmatine/putrescine exchange. This is Probable agmatine/putrescine antiporter AguD from Lactococcus lactis subsp. lactis (strain IL1403) (Streptococcus lactis).